Reading from the N-terminus, the 251-residue chain is Flap endonuclease Xni (251 aa).

Asp104 serves as a coordination point for Mg(2+). One can recognise a 5'-3' exonuclease domain in the interval 160–249; it reads VSPGQLADFW…LDGNLQQLRL (90 aa). Residues Leu171, Ala172, Pro180, Val182, and Ile185 each contribute to the K(+) site. Positions 184-189 are interaction with DNA; that stretch reads GIGPKS.

The protein belongs to the Xni family. Mg(2+) serves as cofactor. Requires K(+) as cofactor.

Has flap endonuclease activity. During DNA replication, flap endonucleases cleave the 5'-overhanging flap structure that is generated by displacement synthesis when DNA polymerase encounters the 5'-end of a downstream Okazaki fragment. This is Flap endonuclease Xni from Cronobacter sakazakii (strain ATCC BAA-894) (Enterobacter sakazakii).